The following is a 304-amino-acid chain: Probable 5-dehydro-4-deoxyglucarate dehydratase (304 aa).

It belongs to the DapA family.

It catalyses the reaction 5-dehydro-4-deoxy-D-glucarate + H(+) = 2,5-dioxopentanoate + CO2 + H2O. It functions in the pathway carbohydrate acid metabolism; D-glucarate degradation; 2,5-dioxopentanoate from D-glucarate: step 2/2. The chain is Probable 5-dehydro-4-deoxyglucarate dehydratase from Rhodococcus opacus (strain B4).